A 318-amino-acid chain; its full sequence is NADH-ubiquinone oxidoreductase chain 1 (318 aa).

Helical transmembrane passes span 3–23, 70–90, 100–120, 146–166, 171–191, 222–242, 254–273, and 294–314; these read LITL…LTLV, MFII…TPLP, LGIL…LWSG, LAII…TTLI, YIWL…STLA, LFFL…TILF, LYTT…FLWI, and LPLT…LASI.

This sequence belongs to the complex I subunit 1 family.

It is found in the mitochondrion inner membrane. The catalysed reaction is a ubiquinone + NADH + 5 H(+)(in) = a ubiquinol + NAD(+) + 4 H(+)(out). Its function is as follows. Core subunit of the mitochondrial membrane respiratory chain NADH dehydrogenase (Complex I) that is believed to belong to the minimal assembly required for catalysis. Complex I functions in the transfer of electrons from NADH to the respiratory chain. The immediate electron acceptor for the enzyme is believed to be ubiquinone. This Phyllostomus elongatus (Lesser spear-nosed bat) protein is NADH-ubiquinone oxidoreductase chain 1 (MT-ND1).